The sequence spans 457 residues: UDP-N-acetylmuramoyl-tripeptide--D-alanyl-D-alanine ligase (457 aa).

109–115 (GSSGKTT) lines the ATP pocket.

It belongs to the MurCDEF family. MurF subfamily.

It is found in the cytoplasm. The catalysed reaction is D-alanyl-D-alanine + UDP-N-acetyl-alpha-D-muramoyl-L-alanyl-gamma-D-glutamyl-meso-2,6-diaminopimelate + ATP = UDP-N-acetyl-alpha-D-muramoyl-L-alanyl-gamma-D-glutamyl-meso-2,6-diaminopimeloyl-D-alanyl-D-alanine + ADP + phosphate + H(+). Its pathway is cell wall biogenesis; peptidoglycan biosynthesis. Functionally, involved in cell wall formation. Catalyzes the final step in the synthesis of UDP-N-acetylmuramoyl-pentapeptide, the precursor of murein. The sequence is that of UDP-N-acetylmuramoyl-tripeptide--D-alanyl-D-alanine ligase from Haemophilus influenzae (strain ATCC 51907 / DSM 11121 / KW20 / Rd).